Reading from the N-terminus, the 297-residue chain is Cell death peptidase (297 aa).

2 helical membrane-spanning segments follow: residues Ile-61–Thr-82 and Ile-149–Thr-178.

This sequence belongs to the peptidase U49 family.

Its subcellular location is the cell membrane. Its function is as follows. Interacts with a short DNA sequence about one-quarter of the way into the major capsid protein gene 23 of T4; general translation inhibition occurs when this late gene of the virus is expressed. This is Cell death peptidase (lit) from Escherichia coli (strain K12).